Here is a 155-residue protein sequence, read N- to C-terminus: Glycosylation-dependent cell adhesion molecule 1 (155 aa).

Positions Met-1 to Ala-18 are cleaved as a signal peptide. Thr-34 is a glycosylation site (O-linked (GalNAc...) threonine). Residues Ser-48, Ser-53, Ser-57, Ser-59, and Ser-65 each carry the phosphoserine modification. The disordered stretch occupies residues Ala-74 to Pro-109. Over residues Gln-90–Ser-101 the composition is skewed to polar residues.

This sequence belongs to the PP3/GlyCAM-1 family. In terms of tissue distribution, highly expressed in whey fraction of camel milk.

The protein is Glycosylation-dependent cell adhesion molecule 1 (GLYCAM1) of Camelus dromedarius (Dromedary).